A 212-amino-acid polypeptide reads, in one-letter code: MAIGLVGRKCGMTRIFTDAGVSVPVTVIEVDPNRITQIKTLETDGYQAVQVTTGERRESRVTNAQKGHFAKAGVAAGRLVKEFRVTEAELEGREVGGTIGVDLFTVGQIVDVTGQSKGKGFQGGVKRWNFRTQDATHGNSVSHRVLGSTGQNQTPGRVFKGKKMAGHLGDERVTVQGLEIVSVDTERSVLVVKGAIPGATGGDVIVRPTIKA.

Residues 136–155 (THGNSVSHRVLGSTGQNQTP) are disordered. Q153 carries the N5-methylglutamine modification.

The protein belongs to the universal ribosomal protein uL3 family. Part of the 50S ribosomal subunit. Forms a cluster with proteins L14 and L19. Post-translationally, methylated by PrmB.

One of the primary rRNA binding proteins, it binds directly near the 3'-end of the 23S rRNA, where it nucleates assembly of the 50S subunit. In Acinetobacter baumannii (strain AB307-0294), this protein is Large ribosomal subunit protein uL3.